The chain runs to 352 residues: GTPase Obg (352 aa).

Residues 1-159 (MSFIDEAKVF…FPIFMQLKVL (159 aa)) enclose the Obg domain. Residues 160 to 327 (SDIGIIGMPN…VMLYEMLQKD (168 aa)) form the OBG-type G domain. Residues 166–173 (GMPNAGKS), 191–195 (FTTLE), 212–215 (DIPG), 279–282 (NKCD), and 308–310 (SLD) contribute to the GTP site. Residues Ser173 and Thr193 each contribute to the Mg(2+) site.

Belongs to the TRAFAC class OBG-HflX-like GTPase superfamily. OBG GTPase family. As to quaternary structure, monomer. Mg(2+) serves as cofactor.

The protein localises to the cytoplasm. Functionally, an essential GTPase which binds GTP, GDP and possibly (p)ppGpp with moderate affinity, with high nucleotide exchange rates and a fairly low GTP hydrolysis rate. Plays a role in control of the cell cycle, stress response, ribosome biogenesis and in those bacteria that undergo differentiation, in morphogenesis control. This chain is GTPase Obg, found in Anaplasma phagocytophilum (strain HZ).